We begin with the raw amino-acid sequence, 514 residues long: Alpha-1,3/1,6-mannosyltransferase ALG2 (514 aa).

N-linked (GlcNAc...) asparagine glycosylation occurs at Asn94. A run of 2 helical transmembrane segments spans residues 443–463 and 468–490; these read WAVM…HVFG and YIYL…IFWV.

It belongs to the glycosyltransferase group 1 family.

It is found in the endoplasmic reticulum membrane. It catalyses the reaction a beta-D-Man-(1-&gt;4)-beta-D-GlcNAc-(1-&gt;4)-alpha-D-GlcNAc-diphospho-di-trans,poly-cis-dolichol + GDP-alpha-D-mannose = an alpha-D-Man-(1-&gt;3)-beta-D-Man-(1-&gt;4)-beta-D-GlcNAc-(1-&gt;4)-alpha-D-GlcNAc-diphospho-di-trans,poly-cis-dolichol + GDP + H(+). It carries out the reaction an alpha-D-Man-(1-&gt;3)-beta-D-Man-(1-&gt;4)-beta-D-GlcNAc-(1-&gt;4)-alpha-D-GlcNAc-diphospho-di-trans,poly-cis-dolichol + GDP-alpha-D-mannose = an alpha-D-Man-(1-&gt;3)-[alpha-D-Man-(1-&gt;6)]-beta-D-Man-(1-&gt;4)-beta-D-GlcNAc-(1-&gt;4)-alpha-D-GlcNAc-diphospho-di-trans,poly-cis-dolichol + GDP + H(+). The protein operates within protein modification; protein glycosylation. In terms of biological role, mannosylates Man(2)GlcNAc(2)-dolichol diphosphate and Man(1)GlcNAc(2)-dolichol diphosphate to form Man(3)GlcNAc(2)-dolichol diphosphate. The chain is Alpha-1,3/1,6-mannosyltransferase ALG2 (ALG2) from Eremothecium gossypii (strain ATCC 10895 / CBS 109.51 / FGSC 9923 / NRRL Y-1056) (Yeast).